The following is a 340-amino-acid chain: Anthranilate phosphoribosyltransferase (340 aa).

5-phospho-alpha-D-ribose 1-diphosphate is bound by residues glycine 82, 85 to 86, threonine 90, 92 to 95, 110 to 118, and serine 122; these read GD, NIST, and KHGSRSVSS. Residue glycine 82 coordinates anthranilate. Serine 94 provides a ligand contact to Mg(2+). Arginine 168 contacts anthranilate. Residues aspartate 227 and glutamate 228 each coordinate Mg(2+).

The protein belongs to the anthranilate phosphoribosyltransferase family. In terms of assembly, homodimer. Mg(2+) serves as cofactor.

The catalysed reaction is N-(5-phospho-beta-D-ribosyl)anthranilate + diphosphate = 5-phospho-alpha-D-ribose 1-diphosphate + anthranilate. Its pathway is amino-acid biosynthesis; L-tryptophan biosynthesis; L-tryptophan from chorismate: step 2/5. Catalyzes the transfer of the phosphoribosyl group of 5-phosphorylribose-1-pyrophosphate (PRPP) to anthranilate to yield N-(5'-phosphoribosyl)-anthranilate (PRA). This Hydrogenovibrio crunogenus (strain DSM 25203 / XCL-2) (Thiomicrospira crunogena) protein is Anthranilate phosphoribosyltransferase.